The primary structure comprises 505 residues: MAKQPTALIILDGFANRESEHGNAVKLANKPNFDRYYSKYPTTQIEASGLDVGLPEGQMGNSEVGHMNIGAGRVVYQSLTRINKSIEDGDFFENDVLNNAINHVKKNDSVLHVFGLLSDGGVHSHYKHLFALLDLAKKQGLEKVYVHAFLDGRDVDQKSALKYIEETEAKFKELGIGQFASVSGRYYAMDRDKRWDREEKAYNAIRNFGGTTFESAKAGVEANYDKDLTDEFVEPFIVQDQNEGVNDGDAVIFYNFRPDRAGQLSEIFTDKAFEGFKVEQINDLFYATFTKYNDNVNAEIVFEKVDLTNTIGEVAQDNGLKQLRIAETEKFPHVTYFMSGGRNEEFEGERRRLIDSPKVATYDLKPEMSAYEVKDALIEELNKGDLDLILLNFANPDMVGHSGMLEPTIKAIEAVDECLGEVVDKITEMGGHAIITADHGNSDMVLTDDDQPMTTHTTNPVPVIVTKDGVTLRETGRLGDLAPTLLDLLNVDQPEDMTGESLINH.

Mn(2+)-binding residues include aspartate 12 and serine 62. Serine 62 serves as the catalytic Phosphoserine intermediate. Substrate is bound by residues histidine 123, 153 to 154 (RD), arginine 185, arginine 191, 257 to 260 (RPDR), and lysine 330. Mn(2+)-binding residues include aspartate 397, histidine 401, aspartate 438, histidine 439, and histidine 456.

This sequence belongs to the BPG-independent phosphoglycerate mutase family. In terms of assembly, monomer. Mn(2+) serves as cofactor.

The enzyme catalyses (2R)-2-phosphoglycerate = (2R)-3-phosphoglycerate. Its pathway is carbohydrate degradation; glycolysis; pyruvate from D-glyceraldehyde 3-phosphate: step 3/5. Functionally, catalyzes the interconversion of 2-phosphoglycerate and 3-phosphoglycerate. The chain is 2,3-bisphosphoglycerate-independent phosphoglycerate mutase from Staphylococcus saprophyticus subsp. saprophyticus (strain ATCC 15305 / DSM 20229 / NCIMB 8711 / NCTC 7292 / S-41).